A 612-amino-acid polypeptide reads, in one-letter code: Rhotekin-2 (612 aa).

The 77-residue stretch at 3–79 (IKRKKIRESA…LRSQMGESNT (77 aa)) folds into the REM-1 domain. The 108-residue stretch at 285–392 (DEAMMGFLNQ…WMEAFWQHFY (108 aa)) folds into the PH domain. 2 disordered regions span residues 483–530 (RNKP…SDKE) and 574–612 (ENKA…QSQV). The span at 486-498 (PPLLSSDDPSTSS) shows a compositional bias: low complexity.

The chain is Rhotekin-2 (rtkn2) from Xenopus laevis (African clawed frog).